Consider the following 122-residue polypeptide: Putative iron-sulfur cluster insertion protein ErpA (122 aa).

Iron-sulfur cluster contacts are provided by Cys50, Cys114, and Cys116.

It belongs to the HesB/IscA family. Homodimer. Requires iron-sulfur cluster as cofactor.

Required for insertion of 4Fe-4S clusters. The polypeptide is Putative iron-sulfur cluster insertion protein ErpA (Cupriavidus necator (strain ATCC 17699 / DSM 428 / KCTC 22496 / NCIMB 10442 / H16 / Stanier 337) (Ralstonia eutropha)).